The chain runs to 221 residues: MSGKPVLHYANTRGRMESVRWLLAAAGVEFEEKFLEKKEDLQKLKSDGSLLFQQVPMVEIDGMKMVQTRAILNYIAGKYNLYGKDLKERALIDMYVEGLADLYELIMMNVVQPADKKEEHLANALDKAANRYFPVFEKVLKDHGHDFLVGNKLSRADVHLLETILAVEESKPDALAKFPLLQSFKARTSNIPNIKKFLQPGSQRKPRLEEKDIPRLMAIFH.

In terms of domain architecture, GST N-terminal spans 3 to 83 (GKPVLHYANT…YIAGKYNLYG (81 aa)). Residues Tyr-9, Lys-45, 54–55 (QV), and 67–68 (QT) each bind glutathione. Positions 85 to 208 (DLKERALIDM…QPGSQRKPRL (124 aa)) constitute a GST C-terminal domain.

This sequence belongs to the GST superfamily. Alpha family. In terms of assembly, homodimer or heterodimer of GSTA1 and GSTA2.

The catalysed reaction is RX + glutathione = an S-substituted glutathione + a halide anion + H(+). It catalyses the reaction prostaglandin A2 + glutathione = prostaglandin A2-S-(R)-glutathione. It carries out the reaction prostaglandin J2 + glutathione = prostaglandin J2-S-(R)-glutathione. The enzyme catalyses (13S)-hydroperoxy-(9Z,11E)-octadecadienoate + 2 glutathione = (13S)-hydroxy-(9Z,11E)-octadecadienoate + glutathione disulfide + H2O. The catalysed reaction is androst-5-ene-3,17-dione = androst-4-ene-3,17-dione. Glutathione S-transferase that catalyzes the nucleophilic attack of the sulfur atom of glutathione on the electrophilic groups of a wide range of exogenous and endogenous compounds. Involved in the formation of glutathione conjugates of both prostaglandin A2 (PGA2) and prostaglandin J2 (PGJ2). It also catalyzes the isomerization of D5-androstene-3,17-dione (AD) into D4-androstene-3,17-dione and may therefore play an important role in hormone biosynthesis. Through its glutathione-dependent peroxidase activity toward the fatty acid hydroperoxide (13S)-hydroperoxy-(9Z,11E)-octadecadienoate/13-HPODE it is also involved in the metabolism of oxidized linoleic acid. This chain is Glutathione S-transferase, found in Gallus gallus (Chicken).